A 72-amino-acid polypeptide reads, in one-letter code: Probable transcription factor elt-4 (72 aa).

A GATA-type zinc finger spans residues 16–40 (CSNCNGTNTTLWRRKAEGDPVCNAC).

Its subcellular location is the nucleus. Probable transcription factor. Plays a role in regulating heme-dependent expression of heme transporter hrg-1. Modulates lifespan in a daf-16-dependent manner. This chain is Probable transcription factor elt-4, found in Caenorhabditis elegans.